Here is a 204-residue protein sequence, read N- to C-terminus: DNA-directed RNA polymerase subunit gamma (204 aa).

Residues cysteine 34, cysteine 36, cysteine 49, and cysteine 52 each coordinate Zn(2+).

Belongs to the RNA polymerase beta' chain family. RpoC1 subfamily. As to quaternary structure, in cyanobacteria the RNAP catalytic core is composed of 2 alpha, 1 beta, 1 beta', 1 gamma and 1 omega subunit. When a sigma factor is associated with the core the holoenzyme is formed, which can initiate transcription. Requires Zn(2+) as cofactor.

The enzyme catalyses RNA(n) + a ribonucleoside 5'-triphosphate = RNA(n+1) + diphosphate. DNA-dependent RNA polymerase catalyzes the transcription of DNA into RNA using the four ribonucleoside triphosphates as substrates. This Prochlorococcus marinus (strain DV1) protein is DNA-directed RNA polymerase subunit gamma (rpoC1).